A 526-amino-acid chain; its full sequence is Peptide chain release factor 3 (526 aa).

Residues 9–277 (NKRRTFAIIS…DFVEYAPGPQ (269 aa)) form the tr-type G domain. GTP is bound by residues 18 to 25 (SHPDAGKT), 86 to 90 (DTPGH), and 140 to 143 (NKLD).

The protein belongs to the TRAFAC class translation factor GTPase superfamily. Classic translation factor GTPase family. PrfC subfamily.

It localises to the cytoplasm. Its function is as follows. Increases the formation of ribosomal termination complexes and stimulates activities of RF-1 and RF-2. It binds guanine nucleotides and has strong preference for UGA stop codons. It may interact directly with the ribosome. The stimulation of RF-1 and RF-2 is significantly reduced by GTP and GDP, but not by GMP. This is Peptide chain release factor 3 from Legionella pneumophila (strain Lens).